A 59-amino-acid chain; its full sequence is Cuticle protein 7 isoform a (59 aa).

Pyrrolidone carboxylic acid is present on glutamine 1.

This Limulus polyphemus (Atlantic horseshoe crab) protein is Cuticle protein 7 isoform a.